Here is a 218-residue protein sequence, read N- to C-terminus: Mediator of RNA polymerase II transcription subunit 20 (218 aa).

The protein belongs to the Mediator complex subunit 20 family. As to quaternary structure, component of the Mediator complex.

Its subcellular location is the nucleus. Functionally, component of the Mediator complex, a coactivator involved in the regulated transcription of nearly all RNA polymerase II-dependent genes. Mediator functions as a bridge to convey information from gene-specific regulatory proteins to the basal RNA polymerase II transcription machinery. Mediator is recruited to promoters by direct interactions with regulatory proteins and serves as a scaffold for the assembly of a functional preinitiation complex with RNA polymerase II and the general transcription factors. This is Mediator of RNA polymerase II transcription subunit 20 (SRB2) from Yarrowia lipolytica (strain CLIB 122 / E 150) (Yeast).